Consider the following 83-residue polypeptide: MLGMYLTTAFNFLTAPTPKTMTEGMTGIWTGLTSALWKVKEGITNIFPEIMVFLGEAWIILIPFAIFCIIKILNFFRVMVKGF.

Residues 50–70 (IMVFLGEAWIILIPFAIFCII) traverse the membrane as a helical segment.

It belongs to the plectrovirus ORF7 family.

Its subcellular location is the host membrane. This is an uncharacterized protein from Spiroplasma melliferum (SpV1).